The following is a 37-amino-acid chain: Potassium channel toxin alpha-KTx 1.13 (37 aa).

At Q1 the chain carries Pyrrolidone carboxylic acid. 3 cysteine pairs are disulfide-bonded: C7/C28, C13/C33, and C17/C35. The interval 26–33 (GKCMNKKC) is interaction with Ca(2+)-activated K(+) channels.

The protein belongs to the short scorpion toxin superfamily. Potassium channel inhibitor family. Alpha-KTx 01 subfamily. In terms of tissue distribution, expressed by the venom gland.

It localises to the secreted. Potent selective inhibitor of high conductance (maxi-K), different medium and small conductance calcium-activated potassium channels (KCa1.1/KCNMA1 and others), as well as a voltage-dependent potassium channel (Kv1.3/KCNA3&gt;Kv1.2/KCNA2&gt;Kv1.6/KCNA3&gt;&gt;Shaker/Sh). It blocks channel activity by a simple bimolecular inhibition process. Functionally, has a pH-specific antimicrobial activity against bacteria (B.subtilis, E.coli and S.aureus) and the fungus C.albicans. This is Potassium channel toxin alpha-KTx 1.13 from Leiurus hebraeus (Hebrew deathstalker scorpion).